Consider the following 334-residue polypeptide: Ferredoxin--NADP reductase (334 aa).

FAD is bound by residues D32, Q40, Y45, V85, F120, D287, and T327.

This sequence belongs to the ferredoxin--NADP reductase type 2 family. In terms of assembly, homodimer. FAD is required as a cofactor.

The enzyme catalyses 2 reduced [2Fe-2S]-[ferredoxin] + NADP(+) + H(+) = 2 oxidized [2Fe-2S]-[ferredoxin] + NADPH. The protein is Ferredoxin--NADP reductase of Wolbachia pipientis subsp. Culex pipiens (strain wPip).